The chain runs to 383 residues: MKKTKFFLLGLAALAMTACNKDNEAEPVTEGNATISVVLKTSNSNRAFGVGDDESKVAKLTVMVYNGEQQEAIKSAENATKVEDIKCSAGQRTLVVMANTGAMELVGKTLAEVKALTTELTAENQEAAGLIMTAEPKTIVLKAGKNYIGYSGTGEGNHIENDPLKIKRVHARMAFTEIKVQMSAAYDNIYTFVPEKIYGLIAKKQSNLFGATLVNADANYLTGSLTTFNGAYTPANYANVPWLSRDYIAPTADAPQGFYVLENDYSANSGTIHPTILCVYGKLQKNGADLTGTDLAAAQAANWVDGQGKTYYPVLVNFNSNNYTYDNGYTPKNKIERNHKYDIKLTITGPGTNNPENPITESAHLNVQCTVAEWVLVGQNATW.

The first 18 residues, 1 to 18 (MKKTKFFLLGLAALAMTA), serve as a signal peptide directing secretion. Residue cysteine 19 is the site of N-palmitoyl cysteine attachment. Cysteine 19 is lipidated: S-diacylglycerol cysteine. A propeptide spanning residues 19–46 (CNKDNEAEPVTEGNATISVVLKTSNSNR) is cleaved from the precursor. An important for oligomerization and fimbrium assembly region spans residues 374-383 (WVLVGQNATW).

The protein belongs to the bacteroidetes fimbrillin superfamily. FimA/Mfa1 family. As to quaternary structure, fimbriae are composed of a major, structural subunit (FimA) and the minor components FimC, FimD and FimE. Head-to-tail oligomerization of FimA molecules mediates assembly of the fimbrium stalk, while the minor components probably form the fimbrium tip. Linear, head-to-tail oligomerization of FimA is mediated by a conformation change, facilitating the insertion of a C-terminal beta-strand into a groove in the N-terminal domain of the following subunit. In terms of processing, synthesized as palmitoylated lipoprotein precursor. Efficient export to the outer membrane and integration into fimbriae requires lipidation and subsequent proteolytic removal of the lipidated propeptide.

Its subcellular location is the fimbrium. The protein localises to the cell outer membrane. Functionally, structural subunit of the major fimbriae. These long, filamentous pili are attached to the cell surface; they mediate biofilm formation, adhesion onto host cells and onto other bacteria that are part of the oral microbiome. They play an important role in the invasion of periodontal tissues. Fimbriae and their constituents are major virulence factors. FimA proteins from different strains have highly divergent sequences, and this has been used for classification. The sequence-based classification correlates with pathogenicity. The chain is Major fimbrium subunit FimA type Ib (fimA) from Porphyromonas gingivalis (Bacteroides gingivalis).